Consider the following 462-residue polypeptide: L-seryl-tRNA(Sec) selenium transferase (462 aa).

An N6-(pyridoxal phosphate)lysine modification is found at Lys292.

Belongs to the SelA family. It depends on pyridoxal 5'-phosphate as a cofactor.

The protein resides in the cytoplasm. It catalyses the reaction L-seryl-tRNA(Sec) + selenophosphate + H(+) = L-selenocysteinyl-tRNA(Sec) + phosphate. Its pathway is aminoacyl-tRNA biosynthesis; selenocysteinyl-tRNA(Sec) biosynthesis; selenocysteinyl-tRNA(Sec) from L-seryl-tRNA(Sec) (bacterial route): step 1/1. Functionally, converts seryl-tRNA(Sec) to selenocysteinyl-tRNA(Sec) required for selenoprotein biosynthesis. In Clostridium perfringens (strain ATCC 13124 / DSM 756 / JCM 1290 / NCIMB 6125 / NCTC 8237 / Type A), this protein is L-seryl-tRNA(Sec) selenium transferase.